Reading from the N-terminus, the 192-residue chain is Flavin prenyltransferase UbiX (192 aa).

FMN is bound by residues 10-12 (GAS), S36, 92-95 (SVAT), and R127. Residues Y157 and K173 each coordinate dimethylallyl phosphate.

Belongs to the UbiX/PAD1 family.

The catalysed reaction is dimethylallyl phosphate + FMNH2 = prenylated FMNH2 + phosphate. Functionally, flavin prenyltransferase that catalyzes the synthesis of the prenylated FMN cofactor (prenyl-FMN) for 4-hydroxy-3-polyprenylbenzoic acid decarboxylase UbiD. The prenyltransferase is metal-independent and links a dimethylallyl moiety from dimethylallyl monophosphate (DMAP) to the flavin N5 and C6 atoms of FMN. The protein is Flavin prenyltransferase UbiX of Chlamydia trachomatis serovar D (strain ATCC VR-885 / DSM 19411 / UW-3/Cx).